The sequence spans 354 residues: Histidinol-phosphate aminotransferase (354 aa).

K210 is subject to N6-(pyridoxal phosphate)lysine.

Belongs to the class-II pyridoxal-phosphate-dependent aminotransferase family. Histidinol-phosphate aminotransferase subfamily. In terms of assembly, homodimer. Pyridoxal 5'-phosphate serves as cofactor.

The enzyme catalyses L-histidinol phosphate + 2-oxoglutarate = 3-(imidazol-4-yl)-2-oxopropyl phosphate + L-glutamate. It participates in amino-acid biosynthesis; L-histidine biosynthesis; L-histidine from 5-phospho-alpha-D-ribose 1-diphosphate: step 7/9. This Clostridium botulinum (strain Okra / Type B1) protein is Histidinol-phosphate aminotransferase.